The sequence spans 463 residues: Glycine--tRNA ligase (463 aa).

2 residues coordinate substrate: arginine 102 and glutamate 165. ATP contacts are provided by residues 197–199 (RNE), 207–212 (FRTREF), 284–285 (EL), and 328–331 (GLTR). 212 to 216 (FEQME) lines the substrate pocket. 324 to 328 (EPAAG) serves as a coordination point for substrate.

Belongs to the class-II aminoacyl-tRNA synthetase family. Homodimer.

The protein localises to the cytoplasm. It catalyses the reaction tRNA(Gly) + glycine + ATP = glycyl-tRNA(Gly) + AMP + diphosphate. Functionally, catalyzes the attachment of glycine to tRNA(Gly). This is Glycine--tRNA ligase from Mycobacterium bovis (strain ATCC BAA-935 / AF2122/97).